A 170-amino-acid chain; its full sequence is Ureidoglycolate lyase (170 aa).

Belongs to the ureidoglycolate lyase family. In terms of assembly, homodimer. It depends on Ni(2+) as a cofactor.

The catalysed reaction is (S)-ureidoglycolate = urea + glyoxylate. The protein operates within nitrogen metabolism; (S)-allantoin degradation. Its function is as follows. Catalyzes the catabolism of the allantoin degradation intermediate (S)-ureidoglycolate, generating urea and glyoxylate. Involved in the utilization of allantoin as nitrogen source. In Pseudomonas savastanoi pv. phaseolicola (strain 1448A / Race 6) (Pseudomonas syringae pv. phaseolicola (strain 1448A / Race 6)), this protein is Ureidoglycolate lyase.